A 73-amino-acid polypeptide reads, in one-letter code: Aminopeptidase G (73 aa).

A disordered region spans residues Gly39–Pro73. Low complexity-rich tracts occupy residues Ala42–Gly51 and Arg61–Pro73.

It belongs to the peptidase M1 family. It depends on Zn(2+) as a cofactor.

It is found in the cytoplasm. In terms of biological role, hydrolyzes preferentially the N-terminal glycine and can also hydrolyze other amino acids which are used by PepN but is unable to hydrolyze basic amino acids. This is Aminopeptidase G (pepG) from Streptomyces lividans.